The following is a 479-amino-acid chain: RAC-gamma serine/threonine-protein kinase (479 aa).

Serine 2 carries the N-acetylserine modification. Positions threonine 5–aspartate 107 constitute a PH domain. Cysteine 59 and cysteine 76 are joined by a disulfide. Residues phenylalanine 148 to phenylalanine 405 form the Protein kinase domain. ATP-binding positions include leucine 154–valine 162 and lysine 177. Aspartate 271 acts as the Proton acceptor in catalysis. A disulfide bridge connects residues cysteine 293 and cysteine 307. The O-linked (GlcNAc) threonine glycan is linked to threonine 302. Threonine 305 carries the post-translational modification Phosphothreonine; by PDPK1. A glycan (O-linked (GlcNAc) threonine) is linked at threonine 309. The region spanning serine 406 to glutamate 479 is the AGC-kinase C-terminal domain. Residues isoleucine 446–glutamate 479 are disordered. Threonine 447 carries the post-translational modification Phosphothreonine. The segment covering lysine 451–methionine 460 has biased composition (acidic residues). Phosphoserine; by PKC/PRKCZ is present on serine 472. A glycan (O-linked (GlcNAc) serine; alternate) is linked at serine 472.

The protein belongs to the protein kinase superfamily. AGC Ser/Thr protein kinase family. RAC subfamily. Interacts (via PH domain) with TCL1A; this enhances AKT3 phosphorylation and activation. Interacts with TRAF6. Interacts with KCTD20. Interacts with BTBD10. Post-translationally, phosphorylation on Thr-305 and Ser-472 is required for full activity. Phosphorylation of the activation loop at Thr-305 by PDPK1/PDK1 is a prerequisite for full activation. Phosphorylation at Ser-472 by mTORC2 in response to growth factors plays a key role in AKT1 activation by facilitating subsequent phosphorylation of the activation loop by PDPK1/PDK1. In terms of processing, ubiquitinated. When fully phosphorylated and translocated into the nucleus, undergoes 'Lys-48'-polyubiquitination catalyzed by TTC3, leading to its degradation by the proteasome. O-GlcNAcylation at Thr-302 and Thr-309 inhibits activating phosphorylation at Thr-305 via disrupting the interaction between AKT and PDPK1/PDK1.

The protein localises to the nucleus. The protein resides in the cytoplasm. Its subcellular location is the membrane. It carries out the reaction L-seryl-[protein] + ATP = O-phospho-L-seryl-[protein] + ADP + H(+). The catalysed reaction is L-threonyl-[protein] + ATP = O-phospho-L-threonyl-[protein] + ADP + H(+). Its activity is regulated as follows. Two specific sites, one in the kinase domain (Thr-305) and the other in the C-terminal regulatory region (Ser-472), need to be phosphorylated for its full activation. IGF-1 leads to the activation of AKT3, which may play a role in regulating cell survival. Functionally, AKT3 is one of 3 closely related serine/threonine-protein kinases (AKT1, AKT2 and AKT3) called the AKT kinase, and which regulate many processes including metabolism, proliferation, cell survival, growth and angiogenesis. This is mediated through serine and/or threonine phosphorylation of a range of downstream substrates. Over 100 substrate candidates have been reported so far, but for most of them, no isoform specificity has been reported. AKT3 is the least studied AKT isoform. It plays an important role in brain development and is crucial for the viability of malignant glioma cells. AKT3 isoform may also be the key molecule in up-regulation and down-regulation of MMP13 via IL13. Required for the coordination of mitochondrial biogenesis with growth factor-induced increases in cellular energy demands. Down-regulation by RNA interference reduces the expression of the phosphorylated form of BAD, resulting in the induction of caspase-dependent apoptosis. This Rattus norvegicus (Rat) protein is RAC-gamma serine/threonine-protein kinase (Akt3).